The primary structure comprises 280 residues: Shikimate dehydrogenase (NADP(+)) (280 aa).

Shikimate is bound by residues 18–20 (SRS) and Thr-65. Residue Lys-69 is the Proton acceptor of the active site. Shikimate is bound by residues Asn-90 and Asp-105. NADP(+) contacts are provided by residues 130 to 134 (GAGGA), 154 to 159 (NRTLAR), and Leu-219. Residue Tyr-221 coordinates shikimate. An NADP(+)-binding site is contributed by Gly-242.

It belongs to the shikimate dehydrogenase family. Homodimer.

It catalyses the reaction shikimate + NADP(+) = 3-dehydroshikimate + NADPH + H(+). It participates in metabolic intermediate biosynthesis; chorismate biosynthesis; chorismate from D-erythrose 4-phosphate and phosphoenolpyruvate: step 4/7. Involved in the biosynthesis of the chorismate, which leads to the biosynthesis of aromatic amino acids. Catalyzes the reversible NADPH linked reduction of 3-dehydroshikimate (DHSA) to yield shikimate (SA). The sequence is that of Shikimate dehydrogenase (NADP(+)) from Mesorhizobium japonicum (strain LMG 29417 / CECT 9101 / MAFF 303099) (Mesorhizobium loti (strain MAFF 303099)).